Here is a 437-residue protein sequence, read N- to C-terminus: Serine hydroxymethyltransferase (437 aa).

(6S)-5,6,7,8-tetrahydrofolate-binding positions include leucine 130 and glycine 134–leucine 136. An N6-(pyridoxal phosphate)lysine modification is found at lysine 239. Threonine 363–phenylalanine 365 serves as a coordination point for (6S)-5,6,7,8-tetrahydrofolate.

It belongs to the SHMT family. In terms of assembly, homodimer. It depends on pyridoxal 5'-phosphate as a cofactor.

Its subcellular location is the cytoplasm. The enzyme catalyses (6R)-5,10-methylene-5,6,7,8-tetrahydrofolate + glycine + H2O = (6S)-5,6,7,8-tetrahydrofolate + L-serine. It functions in the pathway one-carbon metabolism; tetrahydrofolate interconversion. It participates in amino-acid biosynthesis; glycine biosynthesis; glycine from L-serine: step 1/1. In terms of biological role, catalyzes the reversible interconversion of serine and glycine with tetrahydrofolate (THF) serving as the one-carbon carrier. This reaction serves as the major source of one-carbon groups required for the biosynthesis of purines, thymidylate, methionine, and other important biomolecules. Also exhibits THF-independent aldolase activity toward beta-hydroxyamino acids, producing glycine and aldehydes, via a retro-aldol mechanism. The polypeptide is Serine hydroxymethyltransferase (Bartonella henselae (strain ATCC 49882 / DSM 28221 / CCUG 30454 / Houston 1) (Rochalimaea henselae)).